Reading from the N-terminus, the 760-residue chain is 5-methyltetrahydropteroyltriglutamate--homocysteine methyltransferase (760 aa).

5-methyltetrahydropteroyltri-L-glutamate is bound by residues 17 to 20 (RELK) and K118. L-homocysteine-binding positions include 436 to 438 (IGS) and E489. L-methionine is bound by residues 436–438 (IGS) and E489. 5-methyltetrahydropteroyltri-L-glutamate is bound by residues 520 to 521 (RC) and W566. D604 contacts L-homocysteine. D604 provides a ligand contact to L-methionine. E610 contributes to the 5-methyltetrahydropteroyltri-L-glutamate binding site. Zn(2+)-binding residues include H646, C648, and E670. H699 serves as the catalytic Proton donor. C731 is a Zn(2+) binding site.

This sequence belongs to the vitamin-B12 independent methionine synthase family. It depends on Zn(2+) as a cofactor.

It catalyses the reaction 5-methyltetrahydropteroyltri-L-glutamate + L-homocysteine = tetrahydropteroyltri-L-glutamate + L-methionine. It functions in the pathway amino-acid biosynthesis; L-methionine biosynthesis via de novo pathway; L-methionine from L-homocysteine (MetE route): step 1/1. Catalyzes the transfer of a methyl group from 5-methyltetrahydrofolate to homocysteine resulting in methionine formation. This is 5-methyltetrahydropteroyltriglutamate--homocysteine methyltransferase from Vibrio parahaemolyticus serotype O3:K6 (strain RIMD 2210633).